Reading from the N-terminus, the 220-residue chain is Large ribosomal subunit protein bL25 (220 aa).

It belongs to the bacterial ribosomal protein bL25 family. CTC subfamily. In terms of assembly, part of the 50S ribosomal subunit; part of the 5S rRNA/L5/L18/L25 subcomplex. Contacts the 5S rRNA. Binds to the 5S rRNA independently of L5 and L18.

In terms of biological role, this is one of the proteins that binds to the 5S RNA in the ribosome where it forms part of the central protuberance. This is Large ribosomal subunit protein bL25 from Zymomonas mobilis subsp. mobilis (strain ATCC 31821 / ZM4 / CP4).